A 361-amino-acid chain; its full sequence is Peroxidase A (361 aa).

Belongs to the peroxidase family. Post-translationally, partially N-glycosylated.

It is found in the secreted. The enzyme catalyses 2 a phenolic donor + H2O2 = 2 a phenolic radical donor + 2 H2O. This is Peroxidase A from Aloe vera (Aloe).